We begin with the raw amino-acid sequence, 215 residues long: High mobility group protein B1 (215 aa).

1–10 (MGKGDPKKPR) is a binding site for heparin. The sufficient for interaction with HAVCR2 stretch occupies residues 1–97 (MGKGDPKKPR…KFKDPNAPKR (97 aa)). Residues K3, K7, K8, and K12 each carry the N6-acetyllysine modification. An LPS binding (delipidated) region spans residues 3–15 (KGDPKKPRGKMSS). Residues 9–79 (PRGKMSSYAF…RYEREMKTYI (71 aa)) constitute a DNA-binding region (HMG box 1). C23 carries the cysteine sulfonic acid (-SO3H); alternate modification. A disulfide bridge links C23 with C45. The segment at 27-43 (HKKKHPDASVNFSEFSK) is NLS 1. The Nuclear localization signal (NLS) 1 motif lies at 27 to 43 (HKKKHPDASVNFSEFSK). An N6-acetyllysine mark is found at K28, K29, and K30. K28 is covalently cross-linked (Isoglutamyl lysine isopeptide (Lys-Gln) (interchain with Q-?)). At S35 the chain carries Phosphoserine. Residue K43 is modified to N6-acetyllysine. Residues K43 and K44 each participate in an isoglutamyl lysine isopeptide (Lys-Gln) (interchain with Q-?) cross-link. At C45 the chain carries Cysteine sulfonic acid (-SO3H); alternate. An Isoglutamyl lysine isopeptide (Lys-Gln) (interchain with Q-?) cross-link involves residue K68. Positions 76-95 (KTYIPPKGETKKKFKDPNAP) are disordered. Positions 80-96 (PPKGETKKKFKDPNAPK) are LPS binding (Lipid A). Basic and acidic residues predominate over residues 83 to 94 (GETKKKFKDPNA). The cytokine-stimulating activity stretch occupies residues 89 to 108 (FKDPNAPKRPPSAFFLFCSE). At K90 the chain carries N6-acetyllysine. A DNA-binding region (HMG box 2) is located at residues 95–163 (PKRPPSAFFL…KYEKDIAAYR (69 aa)). Phosphoserine is present on S100. C106 is subject to Cysteine sulfonic acid (-SO3H). Residues K127, K128, K141, K172, K173, K177, and K180 each carry the N6-acetyllysine modification. Residues 150-183 (KLKEKYEKDIAAYRAKGKPDAAKKGVVKAEKSKK) form a binding to AGER/RAGE region. Positions 161–179 (AYRAKGKPDAAKKGVVKAE) are enriched in basic and acidic residues. A disordered region spans residues 161–215 (AYRAKGKPDAAKKGVVKAEKSKKKKEEEEDEEDEEDEEEEEDEEDEDEEEDDDDE). An NLS 2 region spans residues 178–184 (AEKSKKK). Residues 178–184 (AEKSKKK) carry the Nuclear localization signal (NLS) 2 motif. An Isoglutamyl lysine isopeptide (Lys-Gln) (interchain with Q-?) cross-link involves residue K180. The residue at position 181 (S181) is an ADP-ribosylserine. Residues K182, K183, K184, and K185 each carry the N6-acetyllysine modification. Isoglutamyl lysine isopeptide (Lys-Gln) (interchain with Q-?) cross-links involve residues K182, K183, and K184. A compositionally biased stretch (acidic residues) spans 187–215 (EEEDEEDEEDEEEEEDEEDEDEEEDDDDE).

This sequence belongs to the HMGB family. As to quaternary structure, interacts (fully reduced HMGB1) with CXCL12; probably in a 1:2 ratio involving two molecules of CXCL12, each interacting with one HMG box of HMGB1; inhibited by glycyrrhizin. Associates with the TLR4:LY96 receptor complex. Component of the RAG complex composed of core components RAG1 and RAG2, and associated component HMGB1 or HMGB2. Interacts (in cytoplasm upon starvation) with BECN1; inhibits the interaction of BECN1 and BCL2 leading to promotion of autophagy. Interacts with KPNA1; involved in nuclear import. Interacts with SREBF1, TLR2, TLR4, TLR9, PTPRZ1, APEX1, FEN1, POLB, TERT. Interacts with IL1B, AGER, MSH2, XPA, XPC, HNF1A, TP53. Interacts with CD24; the probable CD24:SIGLEC10 complex is proposed to inhibit HGMB1-mediated tissue damage immune response. Interacts with THBD; prevents HGMB1 interaction with ACER/RAGE and inhibits HGMB1 pro-inflammatory activity. Interacts with HAVCR2; impairs HMGB1 binding to B-DNA and likely HMGB1-mediated innate immune response. Interacts with XPO1; mediating nuclear export. Interacts with receptor RAGE/AGER. Post-translationally, phosphorylated at serine residues. Phosphorylation in both NLS regions is required for cytoplasmic translocation followed by secretion. Acetylated on multiple sites upon stimulation with LPS. Acetylation on lysine residues in the nuclear localization signals (NLS 1 and NLS 2) leads to cytoplasmic localization and subsequent secretion. Acetylation on Lys-3 results in preferential binding to DNA ends and impairs DNA bending activity. In terms of processing, reduction/oxidation of cysteine residues Cys-23, Cys-45 and Cys-106 and a possible intramolecular disulfide bond involving Cys-23 and Cys-45 give rise to different redox forms with specific functional activities in various cellular compartments: 1- fully reduced HMGB1 (HMGB1C23hC45hC106h), 2- disulfide HMGB1 (HMGB1C23-C45C106h) and 3- sulfonyl HMGB1 (HMGB1C23soC45soC106so). Post-translationally, poly-ADP-ribosylated by PARP1 when secreted following stimulation with LPS. In vitro cleavage by CASP1 is liberating a HMG box 1-containing peptide which may mediate immunogenic activity; the peptide antagonizes apoptosis-induced immune tolerance. Can be proteolytically cleaved by a thrombin:thrombomodulin complex; reduces binding to heparin and pro-inflammatory activities. In terms of processing, forms covalent cross-links mediated by transglutaminase TGM2, between a glutamine and the epsilon-amino group of a lysine residue, forming homopolymers and heteropolymers.

It is found in the nucleus. The protein localises to the chromosome. Its subcellular location is the cytoplasm. The protein resides in the secreted. It localises to the cell membrane. It is found in the endosome. The protein localises to the endoplasmic reticulum-Golgi intermediate compartment. In terms of biological role, multifunctional redox sensitive protein with various roles in different cellular compartments. In the nucleus is one of the major chromatin-associated non-histone proteins and acts as a DNA chaperone involved in replication, transcription, chromatin remodeling, V(D)J recombination, DNA repair and genome stability. Proposed to be an universal biosensor for nucleic acids. Promotes host inflammatory response to sterile and infectious signals and is involved in the coordination and integration of innate and adaptive immune responses. In the cytoplasm functions as a sensor and/or chaperone for immunogenic nucleic acids implicating the activation of TLR9-mediated immune responses, and mediates autophagy. Acts as a danger-associated molecular pattern (DAMP) molecule that amplifies immune responses during tissue injury. Released to the extracellular environment can bind DNA, nucleosomes, IL-1 beta, CXCL12, AGER isoform 2/sRAGE, lipopolysaccharide (LPS) and lipoteichoic acid (LTA), and activates cells through engagement of multiple surface receptors. In the extracellular compartment fully reduced HMGB1 (released by necrosis) acts as a chemokine, disulfide HMGB1 (actively secreted) as a cytokine, and sulfonyl HMGB1 (released from apoptotic cells) promotes immunological tolerance. Has proangiogenic activity. May be involved in platelet activation. Binds to phosphatidylserine and phosphatidylethanolamide. Bound to RAGE mediates signaling for neuronal outgrowth. May play a role in accumulation of expanded polyglutamine (polyQ) proteins. Functionally, nuclear functions are attributed to fully reduced HGMB1. Associates with chromatin and binds DNA with a preference to non-canonical DNA structures such as single-stranded DNA, DNA-containing cruciforms or bent structures, supercoiled DNA and ZDNA. Can bent DNA and enhance DNA flexibility by looping thus providing a mechanism to promote activities on various gene promoters by enhancing transcription factor binding and/or bringing distant regulatory sequences into close proximity. May be involved in nucleotide excision repair (NER), mismatch repair (MMR) and base excision repair (BER) pathways, and double strand break repair such as non-homologous end joining (NHEJ). Involved in V(D)J recombination by acting as a cofactor of the RAG complex: acts by stimulating cleavage and RAG protein binding at the 23 bp spacer of conserved recombination signal sequences (RSS). In vitro can displace histone H1 from highly bent DNA. Can restructure the canonical nucleosome leading to relaxation of structural constraints for transcription factor-binding. Enhances binding of sterol regulatory element-binding proteins (SREBPs) such as SREBF1 to their cognate DNA sequences and increases their transcriptional activities. Facilitates binding of TP53 to DNA. May be involved in mitochondrial quality control and autophagy in a transcription-dependent fashion implicating HSPB1. Can modulate the activity of the telomerase complex and may be involved in telomere maintenance. In the cytoplasm proposed to dissociate the BECN1:BCL2 complex via competitive interaction with BECN1 leading to autophagy activation. Can protect BECN1 and ATG5 from calpain-mediated cleavage and thus proposed to control their proautophagic and proapoptotic functions and to regulate the extent and severity of inflammation-associated cellular injury. In myeloid cells has a protective role against endotoxemia and bacterial infection by promoting autophagy. Involved in endosomal translocation and activation of TLR9 in response to CpG-DNA in macrophages. Its function is as follows. In the extracellular compartment (following either active secretion or passive release) involved in regulation of the inflammatory response. Fully reduced HGMB1 (which subsequently gets oxidized after release) in association with CXCL12 mediates the recruitment of inflammatory cells during the initial phase of tissue injury; the CXCL12:HMGB1 complex triggers CXCR4 homodimerization. Induces the migration of monocyte-derived immature dendritic cells and seems to regulate adhesive and migratory functions of neutrophils implicating AGER/RAGE and ITGAM. Can bind to various types of DNA and RNA including microbial unmethylated CpG-DNA to enhance the innate immune response to nucleic acids. Proposed to act in promiscuous DNA/RNA sensing which cooperates with subsequent discriminative sensing by specific pattern recognition receptors. Promotes extracellular DNA-induced AIM2 inflammasome activation implicating AGER/RAGE. Disulfide HMGB1 binds to transmembrane receptors, such as AGER/RAGE, TLR2, TLR4 and probably TREM1, thus activating their signal transduction pathways. Mediates the release of cytokines/chemokines such as TNF, IL-1, IL-6, IL-8, CCL2, CCL3, CCL4 and CXCL10. Promotes secretion of interferon-gamma by macrophage-stimulated natural killer (NK) cells in concert with other cytokines like IL-2 or IL-12. TLR4 is proposed to be the primary receptor promoting macrophage activation and signaling through TLR4 seems to implicate LY96/MD-2. In bacterial LPS- or LTA-mediated inflammatory responses binds to the endotoxins and transfers them to CD14 for signaling to the respective TLR4:LY96 and TLR2 complexes. Contributes to tumor proliferation by association with ACER/RAGE. Can bind to IL1-beta and signals through the IL1R1:IL1RAP receptor complex. Binding to class A CpG activates cytokine production in plasmacytoid dendritic cells implicating TLR9, MYD88 and AGER/RAGE and can activate autoreactive B cells. Via HMGB1-containing chromatin immune complexes may also promote B cell responses to endogenous TLR9 ligands through a B-cell receptor (BCR)-dependent and ACER/RAGE-independent mechanism. Inhibits phagocytosis of apoptotic cells by macrophages; the function is dependent on poly-ADP-ribosylation and involves binding to phosphatidylserine on the cell surface of apoptotic cells. In adaptive immunity may be involved in enhancing immunity through activation of effector T-cells and suppression of regulatory T (TReg) cells. In contrast, without implicating effector or regulatory T-cells, required for tumor infiltration and activation of T-cells expressing the lymphotoxin LTA:LTB heterotrimer thus promoting tumor malignant progression. Also reported to limit proliferation of T-cells. Released HMGB1:nucleosome complexes formed during apoptosis can signal through TLR2 to induce cytokine production. Involved in induction of immunological tolerance by apoptotic cells; its pro-inflammatory activities when released by apoptotic cells are neutralized by reactive oxygen species (ROS)-dependent oxidation specifically on Cys-106. During macrophage activation by activated lymphocyte-derived self apoptotic DNA (ALD-DNA) promotes recruitment of ALD-DNA to endosomes. The protein is High mobility group protein B1 (HMGB1) of Canis lupus familiaris (Dog).